The primary structure comprises 256 residues: ATG8-interacting protein 1 (256 aa).

The short motif at 14-17 (WEVV) is the AIM (Atg8-family-interacting motif) element. Residues 181 to 200 (ANAIWSLFFAAAVTGLVVLG) traverse the membrane as a helical segment. Positions 208-211 (WQVL) match the AIM (Atg8-family-interacting motif) motif.

As to quaternary structure, interacts with ATG8F. Interacts with ATG8H. Interacts with APE1 and PSBS/NPQ4.

The protein resides in the endoplasmic reticulum membrane. The protein localises to the membrane. It is found in the plastid. Its subcellular location is the chloroplast membrane. In terms of biological role, involved in a special stress-induced plastid-to-vacuole protein trafficking pathway. Interacts with ATG8F in plastid bodies to subsequently enable their delivery to the vacuole by an autophagic pathway. Interacts with the plastid proteins APE1 and PSBS/NPQ4 and may recruit them as cargo into plastid bodies that may be recognized by the autophagy machinery for degradation in the vacuole. Involved in the alleviation of damage caused by salt stress during plant development, probably through its involvement in plastid-to-vacuole and ER-to-vacuole trafficking. Plays a role in seed germination in response to exogenous abscisic acid (ABA) treatment. This chain is ATG8-interacting protein 1, found in Arabidopsis thaliana (Mouse-ear cress).